The chain runs to 374 residues: MKYLLPTAATGLLLLAAQPAVAANTGGYATTDGGETSGAVKKTARSLQEIVDIIEAAKVDSKGKKVKGGAYPLIITYNGNEDSLIKAAEKNICGQWSKDARGVQIKEFTKGITILGTNGSSANFGVWIVNSSDVVVRNMRFGYMPGGAQDGDAIRVDNSPNVWIDHNEIFAKNFECKGTPDNDTTFESAVDIKKGSTNVTVSYNYIHGIKKVGLSGASNTDTGRNLTYHHNIYRDVNSRLPLQRGGLVHAYNNLYDGITGSGFNVRQKGIALIESNWFENALNPVTARNDSSNFGTWELRNNNVTKPADFSKYNITWGRPSTPHVNADDWKNTGKFPSISYKYSPVSAQCVKDKLANYAGVSKNLAVLTAANCK.

The signal sequence occupies residues 1–22 (MKYLLPTAATGLLLLAAQPAVA). Cys-93 and Cys-176 form a disulfide bridge. Ca(2+)-binding residues include Asp-150, Asp-152, Glu-187, and Asp-191. The active site involves Arg-239. Cys-350 and Cys-373 are disulfide-bonded.

It belongs to the polysaccharide lyase 1 family. PLADES subfamily. It depends on Ca(2+) as a cofactor.

The protein resides in the secreted. It carries out the reaction Eliminative cleavage of (1-&gt;4)-alpha-D-galacturonan to give oligosaccharides with 4-deoxy-alpha-D-galact-4-enuronosyl groups at their non-reducing ends.. It functions in the pathway glycan metabolism; pectin degradation; 2-dehydro-3-deoxy-D-gluconate from pectin: step 2/5. Involved in maceration and soft-rotting of plant tissue. In Pectobacterium atrosepticum (strain SCRI 1043 / ATCC BAA-672) (Erwinia carotovora subsp. atroseptica), this protein is Pectate lyase 2 (pel2).